A 62-amino-acid polypeptide reads, in one-letter code: Large ribosomal subunit protein eL37 (62 aa).

The Zn(2+) site is built by Cys-20, Cys-23, Cys-35, and Cys-38. Residues 20 to 38 (CRRCGRRSYNVAKGYCAAC) form a C4-type zinc finger.

It belongs to the eukaryotic ribosomal protein eL37 family. It depends on Zn(2+) as a cofactor.

In terms of biological role, binds to the 23S rRNA. The polypeptide is Large ribosomal subunit protein eL37 (rpl37e) (Aeropyrum pernix (strain ATCC 700893 / DSM 11879 / JCM 9820 / NBRC 100138 / K1)).